Here is a 290-residue protein sequence, read N- to C-terminus: 4-hydroxybenzoate octaprenyltransferase (290 aa).

8 helical membrane-spanning segments follow: residues 23 to 43 (IGAL…TPGV), 46 to 66 (LWIL…GCVV), 99 to 119 (LFVV…TMTI), 141 to 161 (LPQV…FAAV), 163 to 183 (ESVP…AVAY), 213 to 233 (LIIG…GELN), 234 to 254 (GLGW…VYQQ), and 268 to 288 (AFMN…MSYW).

This sequence belongs to the UbiA prenyltransferase family. Mg(2+) is required as a cofactor.

The protein resides in the cell inner membrane. It carries out the reaction all-trans-octaprenyl diphosphate + 4-hydroxybenzoate = 4-hydroxy-3-(all-trans-octaprenyl)benzoate + diphosphate. The protein operates within cofactor biosynthesis; ubiquinone biosynthesis. Catalyzes the prenylation of para-hydroxybenzoate (PHB) with an all-trans polyprenyl group. Mediates the second step in the final reaction sequence of ubiquinone-8 (UQ-8) biosynthesis, which is the condensation of the polyisoprenoid side chain with PHB, generating the first membrane-bound Q intermediate 3-octaprenyl-4-hydroxybenzoate. The protein is 4-hydroxybenzoate octaprenyltransferase of Escherichia coli (strain SE11).